The chain runs to 149 residues: Large ribosomal subunit protein uL13 (149 aa).

It belongs to the universal ribosomal protein uL13 family. In terms of assembly, part of the 50S ribosomal subunit.

Its function is as follows. This protein is one of the early assembly proteins of the 50S ribosomal subunit, although it is not seen to bind rRNA by itself. It is important during the early stages of 50S assembly. This chain is Large ribosomal subunit protein uL13, found in Bifidobacterium longum (strain DJO10A).